The primary structure comprises 150 residues: Large ribosomal subunit protein uL11 (150 aa).

The segment at 83-111 (AAGLKPQGKRNRAKGSEKPGRQTAGTVTA) is disordered.

Belongs to the universal ribosomal protein uL11 family. In terms of assembly, part of the ribosomal stalk of the 50S ribosomal subunit. Interacts with L10 and the large rRNA to form the base of the stalk. L10 forms an elongated spine to which L12 dimers bind in a sequential fashion forming a multimeric L10(L12)X complex. One or more lysine residues are methylated.

In terms of biological role, forms part of the ribosomal stalk which helps the ribosome interact with GTP-bound translation factors. This Paracoccus denitrificans (strain Pd 1222) protein is Large ribosomal subunit protein uL11.